A 191-amino-acid polypeptide reads, in one-letter code: Protein Ves (191 aa).

Belongs to the Ves family.

The sequence is that of Protein Ves from Shigella flexneri.